The primary structure comprises 152 residues: Avidin (152 aa).

The signal sequence occupies residues 1–24; it reads MVHATSPLLLLLLLSLALVAPGLS. An Avidin-like domain is found at 26 to 149; the sequence is RKCSLTGKWT…GINIFTRLRT (124 aa). C28 and C107 are oxidised to a cystine. The N-linked (GlcNAc...) asparagine glycan is linked to N41. Y57 contributes to the biotin binding site.

The protein belongs to the avidin/streptavidin family. As to quaternary structure, homotetramer. In terms of processing, N-linked glycan at Asn-41 consists of GlcNAc(beta1-2)Man(alpha1-3)[GlcNAc(beta1-4)][Man(alpha1-?)Man(alpha1-6)] Man(beta1-4)GlcNAc(beta1-4)GlcNAc. In terms of tissue distribution, synthesized in hen oviduct and concentrated in egg white (where it represents 0.05% of the total protein).

It localises to the secreted. Its function is as follows. The biological function of avidin is not known. Forms a strong non-covalent specific complex with biotin (one molecule of biotin per subunit of avidin). This chain is Avidin (AVD), found in Gallus gallus (Chicken).